The primary structure comprises 142 residues: MPFTQKEITYLRAQGYGRLATVGAHGEPHNVPVSFEIDEERGTIEITGRDMGRSRKFRNVAKNDRVAFVVDDVPCRDPEVVRAVVIHGTAQALPTGGRERRPHCADEMIRIHPRRIVTWGIEGDLSTGVHARDITAEDGGRR.

Belongs to the pyridoxamine 5'-phosphate oxidase family.

It carries out the reaction tetracycline + oxidized coenzyme F420-(gamma-L-Glu)(n) + H(+) = 5a,11a-dehydrotetracycline + reduced coenzyme F420-(gamma-L-Glu)(n). It catalyses the reaction oxytetracycline + oxidized coenzyme F420-(gamma-L-Glu)(n) + H(+) = 5a,11a-dehydrooxytetracycline + reduced coenzyme F420-(gamma-L-Glu)(n). It participates in antibiotic biosynthesis; oxytetracycline biosynthesis. Its function is as follows. Involved in the biosynthesis of the antibiotics tetracycline and oxytetracycline. Catalyzes the C(5) reduction of 5a,11a-dehydrooxytetracycline to yield oxytetracycline as a major product. Also catalyzes the C(12) reduction of 5a,11a-dehydrotetracycline (12-dehydrotetracycline) to produce tetracycline as a minor product. The protein is 5a,11a-dehydrotetracycline/5a,11a-dehydrooxytetracycline reductase of Streptomyces rimosus subsp. rimosus (strain ATCC 10970 / DSM 40260 / JCM 4667 / NRRL 2234).